The chain runs to 638 residues: Phosphomethylpyrimidine synthase (638 aa).

Substrate is bound by residues Asn-243, Met-272, Tyr-301, His-337, 357–359, 398–401, and Glu-437; these read SRG and DGLR. Residue His-441 participates in Zn(2+) binding. Tyr-464 is a binding site for substrate. His-505 contacts Zn(2+). 3 residues coordinate [4Fe-4S] cluster: Cys-585, Cys-588, and Cys-593.

The protein belongs to the ThiC family. As to quaternary structure, homodimer. [4Fe-4S] cluster is required as a cofactor.

The enzyme catalyses 5-amino-1-(5-phospho-beta-D-ribosyl)imidazole + S-adenosyl-L-methionine = 4-amino-2-methyl-5-(phosphooxymethyl)pyrimidine + CO + 5'-deoxyadenosine + formate + L-methionine + 3 H(+). Its pathway is cofactor biosynthesis; thiamine diphosphate biosynthesis. Its function is as follows. Catalyzes the synthesis of the hydroxymethylpyrimidine phosphate (HMP-P) moiety of thiamine from aminoimidazole ribotide (AIR) in a radical S-adenosyl-L-methionine (SAM)-dependent reaction. In Azoarcus sp. (strain BH72), this protein is Phosphomethylpyrimidine synthase.